The primary structure comprises 205 residues: Probable GTP-binding protein EngB (205 aa).

The EngB-type G domain maps to 27 to 201 (TGIEIAFAGR…AAKLDFWFSP (175 aa)). GTP-binding positions include 35 to 42 (GRSNAGKS), 62 to 66 (GRTQL), 80 to 83 (DLPG), 147 to 150 (TKAD), and 180 to 182 (FSA). 2 residues coordinate Mg(2+): Ser42 and Thr64.

This sequence belongs to the TRAFAC class TrmE-Era-EngA-EngB-Septin-like GTPase superfamily. EngB GTPase family. Mg(2+) serves as cofactor.

In terms of biological role, necessary for normal cell division and for the maintenance of normal septation. This chain is Probable GTP-binding protein EngB, found in Haemophilus influenzae (strain PittEE).